The sequence spans 797 residues: Adhesion G-protein coupled receptor G7 (797 aa).

Positions 1–26 (MASCRAWNLRVLVAVVCGLLTGIILG) are cleaved as a signal peptide. The Extracellular portion of the chain corresponds to 27 to 438 (LGIWRIVIRI…QYPKSLDILS (412 aa)). N-linked (GlcNAc...) asparagine glycans are attached at residues Asn82, Asn159, Asn178, Asn191, Asn247, Asn261, Asn312, Asn316, and Asn387. The GAIN-B domain maps to 275–428 (FSVQKGASSS…AVLMTFKKDY (154 aa)). 2 disulfides stabilise this stretch: Cys383–Cys410 and Cys398–Cys412. The tract at residues 383 to 428 (CVYWNLSAKDWDTYGCQKDKGTDGFLRCRCNHTTNFAVLMTFKKDY) is GPS. The N-linked (GlcNAc...) asparagine glycan is linked to Asn413. The helical transmembrane segment at 439 to 459 (NVGCALSVTGLALTVIFQIVT) threads the bilayer. Residues 460 to 468 (RKVRKTSVT) are Cytoplasmic-facing. Residues 469–489 (WVLVNLCISMLIFNLLFVFGI) form a helical membrane-spanning segment. Over 490 to 528 (ENSNKNLQTSDGDINNIDFDNNDIPRTDTINIPNPMCTA) the chain is Extracellular. The helical transmembrane segment at 529–549 (IAALLHYFLLVTFTWNALSAA) threads the bilayer. Over 550–565 (QLYYLLIRTMKPLPRH) the chain is Cytoplasmic. The chain crosses the membrane as a helical span at residues 566–586 (FILFISLIGWGVPAIVVAITV). At 587 to 623 (GVIYSQNGNNPQWELDYRQEKICWLAIPEPNGVIKSP) the chain is on the extracellular side. Residues 624-644 (LLWSFIVPVTIILISNVVMFI) form a helical membrane-spanning segment. At 645-669 (TISIKVLWKNNQNLTSTKKVSSMKK) the chain is on the cytoplasmic side. A helical membrane pass occupies residues 670-690 (IVSTLSVAVVFGITWILAYLM). Residues 691 to 698 (LVNDDSIR) lie on the Extracellular side of the membrane. A helical membrane pass occupies residues 699 to 719 (IVFSYIFCLFNTTQGLQIFIL). Residues 720–797 (YTVRTKVFQS…SESDNAKESI (78 aa)) are Cytoplasmic-facing.

The protein belongs to the G-protein coupled receptor 2 family. Adhesion G-protein coupled receptor (ADGR) subfamily.

It is found in the membrane. In terms of biological role, orphan receptor. The protein is Adhesion G-protein coupled receptor G7 (ADGRG7) of Homo sapiens (Human).